A 107-amino-acid polypeptide reads, in one-letter code: Ig kappa chain V-VI region NQ2-17.4.1 (107 aa).

Residues 1–23 (QIVLTQSPAIMSASPGQKVTMTC) are framework-1. A disulfide bridge links Cys23 with Cys87. Residues 24–33 (SASSSVSYMH) form a complementarity-determining-1 region. The framework-2 stretch occupies residues 34–48 (WYQQKSGTSPKRWIY). Residues 49-55 (DTSKLAS) form a complementarity-determining-2 region. The segment at 56–87 (GVPARFSGSGSATSYSLTITSMQAEDAATYYC) is framework-3. Residues 88–96 (QQWSSNPLT) are complementarity-determining-3. The framework-4 stretch occupies residues 97–106 (FGAGTKLELK).

Functionally, anti-2-phenyl oxazolone (PHOX) Antibody. The chain is Ig kappa chain V-VI region NQ2-17.4.1 from Mus musculus (Mouse).